A 686-amino-acid polypeptide reads, in one-letter code: Probable ferric reductase transmembrane component (686 aa).

Transmembrane regions (helical) follow at residues Leu-23 to Val-43, Thr-79 to Ala-99, Val-111 to Tyr-131, Val-147 to Gly-167, Trp-178 to Val-198, Thr-205 to Ser-225, and Val-256 to Val-276. Residues Leu-108–Glu-666 form the Ferric oxidoreductase domain. His-308–Ser-314 contacts FAD. A helical membrane pass occupies residues Leu-392–Phe-412. Ile-431–Phe-439 contacts NAD(+). Asn-506 and Asn-644 each carry an N-linked (GlcNAc...) asparagine glycan.

It depends on FAD as a cofactor.

It is found in the membrane. It catalyses the reaction 2 a Fe(II)-siderophore + NAD(+) + H(+) = 2 a Fe(III)-siderophore + NADH. Functionally, is required for the uptake of Fe(3+) ions. May participate in the transport of electrons from cytoplasm to an extracellular substrate (Fe(3+) ion) via FAD and heme intermediates. Involved in iron homeostasis. This is Probable ferric reductase transmembrane component (FRE8) from Eremothecium gossypii (strain ATCC 10895 / CBS 109.51 / FGSC 9923 / NRRL Y-1056) (Yeast).